A 115-amino-acid chain; its full sequence is NADH-ubiquinone oxidoreductase chain 3 (115 aa).

Methionine 1 is modified (N-formylmethionine). 3 consecutive transmembrane segments (helical) span residues 3–23 (LMLA…IAFW), 55–75 (FFLV…LLPL), and 84–104 (LNTM…SLAY).

In terms of assembly, core subunit of respiratory chain NADH dehydrogenase (Complex I) which is composed of 45 different subunits. Interacts with TMEM186. Interacts with TMEM242.

It is found in the mitochondrion inner membrane. It catalyses the reaction a ubiquinone + NADH + 5 H(+)(in) = a ubiquinol + NAD(+) + 4 H(+)(out). Core subunit of the mitochondrial membrane respiratory chain NADH dehydrogenase (Complex I) which catalyzes electron transfer from NADH through the respiratory chain, using ubiquinone as an electron acceptor. Essential for the catalytic activity of complex I. The polypeptide is NADH-ubiquinone oxidoreductase chain 3 (Bos taurus (Bovine)).